The sequence spans 309 residues: ADP-L-glycero-D-manno-heptose-6-epimerase (309 aa).

NADP(+)-binding positions include 10–11 (FI), 31–32 (DN), Lys38, Lys53, 75–79 (EGACS), and Asn92. Tyr140 acts as the Proton acceptor in catalysis. Lys144 contacts NADP(+). Substrate is bound at residue Asn169. The NADP(+) site is built by Val170 and Lys178. The active-site Proton acceptor is the Lys178. Residues Ser180, His187, 201-204 (FEGS), Arg209, and Tyr272 contribute to the substrate site.

The protein belongs to the NAD(P)-dependent epimerase/dehydratase family. HldD subfamily. As to quaternary structure, homopentamer. NADP(+) is required as a cofactor.

It carries out the reaction ADP-D-glycero-beta-D-manno-heptose = ADP-L-glycero-beta-D-manno-heptose. The protein operates within nucleotide-sugar biosynthesis; ADP-L-glycero-beta-D-manno-heptose biosynthesis; ADP-L-glycero-beta-D-manno-heptose from D-glycero-beta-D-manno-heptose 7-phosphate: step 4/4. Its function is as follows. Catalyzes the interconversion between ADP-D-glycero-beta-D-manno-heptose and ADP-L-glycero-beta-D-manno-heptose via an epimerization at carbon 6 of the heptose. This chain is ADP-L-glycero-D-manno-heptose-6-epimerase, found in Enterobacter sp. (strain 638).